A 428-amino-acid polypeptide reads, in one-letter code: Enolase (428 aa).

Residue Q163 coordinates (2R)-2-phosphoglycerate. E205 acts as the Proton donor in catalysis. Mg(2+)-binding residues include D242, E285, and D312. (2R)-2-phosphoglycerate is bound by residues K337, R366, S367, and K388. The Proton acceptor role is filled by K337.

It belongs to the enolase family. It depends on Mg(2+) as a cofactor.

The protein resides in the cytoplasm. It is found in the secreted. The protein localises to the cell surface. The catalysed reaction is (2R)-2-phosphoglycerate = phosphoenolpyruvate + H2O. Its pathway is carbohydrate degradation; glycolysis; pyruvate from D-glyceraldehyde 3-phosphate: step 4/5. In terms of biological role, catalyzes the reversible conversion of 2-phosphoglycerate (2-PG) into phosphoenolpyruvate (PEP). It is essential for the degradation of carbohydrates via glycolysis. In Carboxydothermus hydrogenoformans (strain ATCC BAA-161 / DSM 6008 / Z-2901), this protein is Enolase.